A 217-amino-acid chain; its full sequence is Ribonuclease T (217 aa).

The Exonuclease domain occupies 20 to 194 (VVIDIETAGF…YDTQQTANLF (175 aa)). 4 residues coordinate Mg(2+): Asp23, Glu25, His181, and Asp186. The active-site Proton donor/acceptor is His181.

Belongs to the RNase T family. Homodimer. It depends on Mg(2+) as a cofactor.

In terms of biological role, trims short 3' overhangs of a variety of RNA species, leaving a one or two nucleotide 3' overhang. Responsible for the end-turnover of tRNA: specifically removes the terminal AMP residue from uncharged tRNA (tRNA-C-C-A). Also appears to be involved in tRNA biosynthesis. The polypeptide is Ribonuclease T (Buchnera aphidicola subsp. Baizongia pistaciae (strain Bp)).